A 482-amino-acid chain; its full sequence is Peptide chain release factor PrfB2, chloroplastic (482 aa).

Residues 1 to 21 (MLSLIIRRSRSRFIIHGIKIS) constitute a chloroplast transit peptide.

This sequence belongs to the prokaryotic/mitochondrial release factor family.

The protein resides in the plastid. Its subcellular location is the chloroplast stroma. In terms of biological role, directs the termination of translation in response to the peptide chain termination codon UGA. Required for the proper translation, stability and normal processing of UGA-containing polycistronic transcripts in chloroplasts. This is Peptide chain release factor PrfB2, chloroplastic from Arabidopsis thaliana (Mouse-ear cress).